The following is a 140-amino-acid chain: MDNRIPYDDYPVVFLPAYENPPAWIPPHERVYHPDYNNELTQFLPRIVTLKKPPGAQLGFNIRGGKASQLGIFISKVIPDSDAHRAGLQEGDQVLAVNDVDFQDIEHSKAVEILKTAREISMRVRFFPYNYHRQKERTVH.

The PDZ domain maps to 47–129 (IVTLKKPPGA…ISMRVRFFPY (83 aa)).

As to quaternary structure, interacts with ATP2B1, ATP2B2, ATP2B3, ATP2B4 and ATP7A. Interacts with PLEKHA7 (via WW domains) at zonula adherens; this interaction is essential for the interaction between PLEKHA7 and the ADAM10-binding protein TSPAN33. Interacts with SLC5A6.

It is found in the cytoplasm. The protein localises to the cell junction. Its subcellular location is the adherens junction. The protein resides in the cell membrane. Functionally, mediates docking of ADAM10 to zonula adherens by interacting with PLEKHA7 which is required for PLEKHA7 to interact with the ADAM10-binding protein TSPAN33. This Mus musculus (Mouse) protein is PDZ domain-containing protein 11 (Pdzd11).